We begin with the raw amino-acid sequence, 405 residues long: Serine/threonine transporter SstT (405 aa).

Helical transmembrane passes span 13–33, 43–63, 82–102, 141–161, 185–205, 217–237, 298–318, and 339–359; these read GGSL…LAGF, FLGD…VFVL, IILL…LMSF, ALIN…GIAL, FVIC…IAQT, LGVL…LIVF, MAGA…TLGI, and ASGV…LFGI.

This sequence belongs to the dicarboxylate/amino acid:cation symporter (DAACS) (TC 2.A.23) family.

It is found in the cell inner membrane. It catalyses the reaction L-serine(in) + Na(+)(in) = L-serine(out) + Na(+)(out). The catalysed reaction is L-threonine(in) + Na(+)(in) = L-threonine(out) + Na(+)(out). Functionally, involved in the import of serine and threonine into the cell, with the concomitant import of sodium (symport system). This Shewanella amazonensis (strain ATCC BAA-1098 / SB2B) protein is Serine/threonine transporter SstT.